The chain runs to 460 residues: Muscarinic acetylcholine receptor M1 (460 aa).

At 1–22 (MNTSAPPAVSPNITVLAPGKGP) the chain is on the extracellular side. N-linked (GlcNAc...) asparagine glycans are attached at residues Asn-2 and Asn-12. The chain crosses the membrane as a helical span at residues 23-48 (WQVAFIGITTGLLSLATVTGNLLVLI). Residues 49-62 (SFKVNTELKTVNNY) lie on the Cytoplasmic side of the membrane. A helical transmembrane segment spans residues 63–84 (FLLSLACADLIIGTFSMNLYTT). Residues 85–95 (YLLMGHWALGT) are Extracellular-facing. The chain crosses the membrane as a helical span at residues 96–121 (LACDLWLALDYVASNASVMNLLLISF). Cys-98 and Cys-178 are oxidised to a cystine. Residues 122-142 (DRYFSVTRPLSYRAKRTPRRA) are Cytoplasmic-facing. A helical transmembrane segment spans residues 143–164 (ALMIGLAWLVSFVLWAPAILFW). At 165-185 (QYLVGERTVLAGQCYIQFLSQ) the chain is on the extracellular side. A helical membrane pass occupies residues 186–209 (PIITFGTAMAAFYLPVTVMCTLYW). Topologically, residues 210–366 (RIYRETENRA…LVKEKKAART (157 aa)) are cytoplasmic. Disordered stretches follow at residues 225-256 (LQGS…ETPP), 274-296 (WKEE…GEEP), and 310-351 (EAQA…QLAK). Thr-230 is modified (phosphothreonine). Residues 238 to 247 (SSSSERSQPG) are compositionally biased toward low complexity. Residues 328–343 (RPTRKGRERAGKGQKP) show a composition bias toward basic residues. Residues 367 to 390 (LSAILLAFIVTWTPYNIMVLVSTF) traverse the membrane as a helical segment. Residues 391-397 (CKDCVPE) are Extracellular-facing. The helical transmembrane segment at 398–420 (TLWELGYWLCYVNSTINPMCYAL) threads the bilayer. Over 421–460 (CNKAFRDTFRLLLLCRWDKRRWRKIPKRPGSVHRTPSRQC) the chain is Cytoplasmic. Thr-428 bears the Phosphothreonine mark. The residue at position 451 (Ser-451) is a Phosphoserine. Phosphothreonine is present on Thr-455. Position 457 is a phosphoserine (Ser-457).

It belongs to the G-protein coupled receptor 1 family. Muscarinic acetylcholine receptor subfamily. CHRM1 sub-subfamily. Interacts with GPRASP2. Interacts with TMEM147.

It localises to the cell membrane. The protein resides in the postsynaptic cell membrane. Functionally, the muscarinic acetylcholine receptor mediates various cellular responses, including inhibition of adenylate cyclase, breakdown of phosphoinositides and modulation of potassium channels through the action of G proteins. Primary transducing effect is Pi turnover. This is Muscarinic acetylcholine receptor M1 (CHRM1) from Sus scrofa (Pig).